The following is a 376-amino-acid chain: N-acetyldiaminopimelate deacetylase (376 aa).

The active site involves aspartate 69. The active-site Proton acceptor is glutamate 127.

This sequence belongs to the peptidase M20A family. N-acetyldiaminopimelate deacetylase subfamily.

The enzyme catalyses N-acetyl-(2S,6S)-2,6-diaminopimelate + H2O = (2S,6S)-2,6-diaminopimelate + acetate. It participates in amino-acid biosynthesis; L-lysine biosynthesis via DAP pathway; LL-2,6-diaminopimelate from (S)-tetrahydrodipicolinate (acetylase route): step 3/3. Its function is as follows. Catalyzes the conversion of N-acetyl-diaminopimelate to diaminopimelate and acetate. This chain is N-acetyldiaminopimelate deacetylase, found in Lactococcus lactis subsp. cremoris (strain SK11).